Reading from the N-terminus, the 645-residue chain is MQRRQQQKEAPSNQNIMATILGSIPREAGVTKIEYEGPRIALYTNTPRYLLEHNEIISNLVNVIKKRIIVRIDESVRKKEEDARKMLSKLVPAEAKLQGTFFDTTTGEVSLEAKRPWLLQRNSAEFSHADVSEKIGWTLRIRKATTSQSSTMQVINRTLRASSIERGKQLKQIGDDIFRPKLATRSEISLTALGGFGQVGRSCMLLSTLDSKVLVDCGVNPGAAHPSESYPRLDWAGITLDDLDAVVIGHAHLDHTGFLPVLAKYGYRGPIYCTEPTLPMMNLIQLDAIKVATAQGRVPVYAERDVRQIMRQAITLPYGTVTDISPDIKLVLANAGHILGSALCHFHIGSGDHNFVYSGDIKFGKSILFEAASWNFPRVETLLIESTYGAKEDIQPTRQEVESAFINAVNGALADGGKVLIPIPAVGRAQEIMMVIDHYMKSGEMAEAPVFTEGMISEASAIHEAHPEYLARELKQKILETDDNPFDSEYFTNVEHADGRDEALRDGSPCIILATSGMLEGGPVLEYFKSIAPHKQNKILFVSYQVNGTLGRRVLDGARQVPLMNRGGKIEVVNIECRMEKLDGFSGHSDYNQLTGFVQKLRPKLRRVLVNHGERRKSENLALAVRRMFRIPAHYPQIQESIKLF.

A KHa region spans residues 10 to 77; the sequence is APSNQNIMAT…IIVRIDESVR (68 aa). Positions 78–146 are KHb; that stretch reads KKEEDARKML…WTLRIRKATT (69 aa). The metallo-beta-lactamase N-terminus stretch occupies residues 187–391; it reads EISLTALGGF…LLIESTYGAK (205 aa). Residues H250, H252, D254, H255, H337, and D360 each contribute to the Zn(2+) site. The segment at 392–586 is beta-Casp; the sequence is EDIQPTRQEV…CRMEKLDGFS (195 aa). The interval 587-645 is metallo-beta-lactamase C-terminus; it reads GHSDYNQLTGFVQKLRPKLRRVLVNHGERRKSENLALAVRRMFRIPAHYPQIQESIKLF. H612 lines the Zn(2+) pocket.

This sequence belongs to the metallo-beta-lactamase superfamily. RNA-metabolizing metallo-beta-lactamase-like family. FttA subfamily. Homodimer. Interacts with RNA polymerase (RNAP), interacts with the Spt4-Spt5 complex. The cofactor is Zn(2+).

Functionally, terminates transcription on the whole genome. Termination is linked to FttA-mediated RNA cleavage and does not require NTP hydrolysis. Cleaves endonucleolytically at the RNA exit channel of RNA polymerase (RNAP); the 5'-3' exonuclease activity of this protein degrades the nascent RNA released from RNAP. In terms of biological role, terminates transcription genome-wide in M.maripaludis. Restores wild-type growth to a strain of Methanococcus maripaludis depleted for this gene at 22 degrees Celsius and prevents transcriptional read-through. Transcription termination is most effective in vivo on RNAs with more than one U4-tract in their 3'-ends. Has endonuclease activity after U-rich tracts in transcription termination sequences. This Cenarchaeum symbiosum (strain A) protein is Transcription termination factor FttA.